Consider the following 240-residue polypeptide: 2,3,4,5-tetrahydropyridine-2,6-dicarboxylate N-acetyltransferase (240 aa).

It belongs to the transferase hexapeptide repeat family. DapH subfamily.

The catalysed reaction is (S)-2,3,4,5-tetrahydrodipicolinate + acetyl-CoA + H2O = L-2-acetamido-6-oxoheptanedioate + CoA. The protein operates within amino-acid biosynthesis; L-lysine biosynthesis via DAP pathway; LL-2,6-diaminopimelate from (S)-tetrahydrodipicolinate (acetylase route): step 1/3. Functionally, catalyzes the transfer of an acetyl group from acetyl-CoA to tetrahydrodipicolinate. The sequence is that of 2,3,4,5-tetrahydropyridine-2,6-dicarboxylate N-acetyltransferase from Staphylococcus epidermidis (strain ATCC 12228 / FDA PCI 1200).